Here is a 300-residue protein sequence, read N- to C-terminus: N-acetylmannosamine kinase (300 aa).

Residues 5-12 and 132-139 contribute to the ATP site; these read ALDIGGTK and GVGGGIVL. Positions 156, 166, 168, and 173 each coordinate Zn(2+).

Belongs to the ROK (NagC/XylR) family. NanK subfamily. As to quaternary structure, homodimer.

The catalysed reaction is an N-acyl-D-mannosamine + ATP = an N-acyl-D-mannosamine 6-phosphate + ADP + H(+). Its pathway is amino-sugar metabolism; N-acetylneuraminate degradation; D-fructose 6-phosphate from N-acetylneuraminate: step 2/5. Functionally, catalyzes the phosphorylation of N-acetylmannosamine (ManNAc) to ManNAc-6-P. The sequence is that of N-acetylmannosamine kinase from Haemophilus influenzae (strain 86-028NP).